The following is a 318-amino-acid chain: NADH-ubiquinone oxidoreductase chain 1 (318 aa).

The next 8 helical transmembrane spans lie at 2–22, 70–90, 98–118, 140–160, 173–193, 217–237, 253–273, and 294–314; these read FTIN…FLTL, LYMA…TPLP, FNLG…SILW, ISYG…SGSF, WLLL…LAET, AGSF…MNAL, ELYT…FLWI, and LPLT…LSGI.

The protein belongs to the complex I subunit 1 family.

It localises to the mitochondrion inner membrane. It carries out the reaction a ubiquinone + NADH + 5 H(+)(in) = a ubiquinol + NAD(+) + 4 H(+)(out). Functionally, core subunit of the mitochondrial membrane respiratory chain NADH dehydrogenase (Complex I) that is believed to belong to the minimal assembly required for catalysis. Complex I functions in the transfer of electrons from NADH to the respiratory chain. The immediate electron acceptor for the enzyme is believed to be ubiquinone. The sequence is that of NADH-ubiquinone oxidoreductase chain 1 (MT-ND1) from Sapajus apella (Brown-capped capuchin).